Here is a 193-residue protein sequence, read N- to C-terminus: Holliday junction branch migration complex subunit RuvA (193 aa).

A domain I region spans residues 1-64; that stretch reads MIGRIAGVLL…EDAHLLYGFL (64 aa). A domain II region spans residues 65–139; the sequence is TPQERSTFRE…GKLGADLGAM (75 aa). The interval 139 to 143 is flexible linker; that stretch reads MAGAA. Residues 144 to 193 are domain III; it reads SQSDHASDILNALLALGYSEKEGLAAIKNVPAGTGVSEGIKLALKALSKA.

It belongs to the RuvA family. Homotetramer. Forms an RuvA(8)-RuvB(12)-Holliday junction (HJ) complex. HJ DNA is sandwiched between 2 RuvA tetramers; dsDNA enters through RuvA and exits via RuvB. An RuvB hexamer assembles on each DNA strand where it exits the tetramer. Each RuvB hexamer is contacted by two RuvA subunits (via domain III) on 2 adjacent RuvB subunits; this complex drives branch migration. In the full resolvosome a probable DNA-RuvA(4)-RuvB(12)-RuvC(2) complex forms which resolves the HJ.

Its subcellular location is the cytoplasm. The RuvA-RuvB-RuvC complex processes Holliday junction (HJ) DNA during genetic recombination and DNA repair, while the RuvA-RuvB complex plays an important role in the rescue of blocked DNA replication forks via replication fork reversal (RFR). RuvA specifically binds to HJ cruciform DNA, conferring on it an open structure. The RuvB hexamer acts as an ATP-dependent pump, pulling dsDNA into and through the RuvAB complex. HJ branch migration allows RuvC to scan DNA until it finds its consensus sequence, where it cleaves and resolves the cruciform DNA. The polypeptide is Holliday junction branch migration complex subunit RuvA (Paraburkholderia phymatum (strain DSM 17167 / CIP 108236 / LMG 21445 / STM815) (Burkholderia phymatum)).